The sequence spans 300 residues: Haloalkane dehalogenase (300 aa).

One can recognise an AB hydrolase-1 domain in the interval 32 to 155; sequence AIVFQHGNPT…PAVRGVFQGF (124 aa). Residue Asp-109 is the Nucleophile of the active site. Glu-133 serves as the catalytic Proton donor. His-273 serves as the catalytic Proton acceptor.

The protein belongs to the haloalkane dehalogenase family. Type 2 subfamily. As to quaternary structure, monomer.

The enzyme catalyses 1-haloalkane + H2O = a halide anion + a primary alcohol + H(+). In terms of biological role, catalyzes hydrolytic cleavage of carbon-halogen bonds in halogenated aliphatic compounds, leading to the formation of the corresponding primary alcohols, halide ions and protons. This chain is Haloalkane dehalogenase, found in Mycobacterium bovis (strain ATCC BAA-935 / AF2122/97).